We begin with the raw amino-acid sequence, 918 residues long: Signal transduction histidine-protein kinase BarA (918 aa).

The Cytoplasmic segment spans residues 1 to 9 (MTNYSLRAR). The chain crosses the membrane as a helical span at residues 10 to 31 (MMILILAPTVLIGLLLSIFFVV). The Periplasmic portion of the chain corresponds to 32–176 (HRYNDLQRQL…KSVRLQQYKE (145 aa)). The chain crosses the membrane as a helical span at residues 177 to 196 (IFISSVMMLFCIGIALIFGW). The Cytoplasmic portion of the chain corresponds to 197–918 (RLMRDVTGPI…VAREASKILG (722 aa)). In terms of domain architecture, HAMP spans 200–252 (RDVTGPIRNMVNTVDRIRRGQLDSRVEGFMLGELDMLKNGINSMAMSLAAYHE). Residues 299–520 (NMSHELRTPL…TFWFHINLDL (222 aa)) form the Histidine kinase domain. Position 302 is a phosphohistidine; by autocatalysis (His-302). One can recognise a Response regulatory domain in the interval 669-785 (TVMAVDDNPA…RLHNLLLRYK (117 aa)). Asp-718 is modified (4-aspartylphosphate). The HPt domain maps to 822 to 918 (KTDLARDMLQ…VAREASKILG (97 aa)). His-861 is modified (phosphohistidine).

Post-translationally, activation requires a sequential transfer of a phosphate group from a His in the primary transmitter domain, to an Asp in the receiver domain and to a His in the secondary transmitter domain.

It is found in the cell inner membrane. The catalysed reaction is ATP + protein L-histidine = ADP + protein N-phospho-L-histidine.. Member of the two-component regulatory system UvrY/BarA involved in the regulation of carbon metabolism via the CsrA/CsrB regulatory system. Phosphorylates UvrY, probably via a four-step phosphorelay. The chain is Signal transduction histidine-protein kinase BarA (barA) from Escherichia coli O157:H7.